The primary structure comprises 451 residues: Homeobox protein meis3-B (451 aa).

Positions 33 to 64 are disordered; sequence HHSLSQSTPYGSTGAAHRVPMPPGMGSNDGLK. The span at 34-43 shows a compositional bias: polar residues; that stretch reads HSLSQSTPYG. Residues 102–185 form the MEIS N-terminal domain; the sequence is GGDVCSSDSF…PIDLVIDDRD (84 aa). The disordered stretch occupies residues 206–272; it reads NNTWIRDHDE…RDKKRNKKRG (67 aa). Residues 218–230 show a composition bias toward low complexity; that stretch reads STHSGTPGPSSGG. Residues 231 to 242 show a composition bias toward polar residues; the sequence is LASQSGDNSSEQ. Positions 267–329 form a DNA-binding region, homeobox; sequence RNKKRGIFPK…NARRRIVQPM (63 aa).

It belongs to the TALE/MEIS homeobox family.

The protein resides in the nucleus. Its function is as follows. A caudalizing protein which is required to pattern the anterior/posterior (A/P) axis during central nervous system (CNS) formation. Inhibits anterior neural expression and acts as a transcriptional activator to induce posterior neural gene expression. Maintains a proper A/P balance required for hindbrain formation by activating the FGF/MAPK pathway, which modulates the planar cell polarity (PCP) pathway. Interacts with retinoid signaling during hindbrain patterning. In Xenopus laevis (African clawed frog), this protein is Homeobox protein meis3-B (meis3-b).